Reading from the N-terminus, the 160-residue chain is Major pollen allergen Bet v 1-J (160 aa).

Brassinolide is bound by residues lysine 55, tyrosine 82, tyrosine 84, and asparagine 101. Hydrophobic ligand pocket regions lie at residues 116–118 (KIN) and 133–141 (QIKASKEMG).

Belongs to the BetVI family. In terms of tissue distribution, pollen.

It localises to the cytoplasm. Its function is as follows. May be a general steroid carrier protein. The sequence is that of Major pollen allergen Bet v 1-J from Betula pendula (European white birch).